The sequence spans 504 residues: ATP synthase subunit alpha, chloroplastic (504 aa).

170-177 (GDRQTGKT) contacts ATP.

Belongs to the ATPase alpha/beta chains family. In terms of assembly, F-type ATPases have 2 components, CF(1) - the catalytic core - and CF(0) - the membrane proton channel. CF(1) has five subunits: alpha(3), beta(3), gamma(1), delta(1), epsilon(1). CF(0) has four main subunits: a, b, b' and c.

The protein resides in the plastid. The protein localises to the chloroplast thylakoid membrane. It carries out the reaction ATP + H2O + 4 H(+)(in) = ADP + phosphate + 5 H(+)(out). Produces ATP from ADP in the presence of a proton gradient across the membrane. The alpha chain is a regulatory subunit. In Pyropia yezoensis (Susabi-nori), this protein is ATP synthase subunit alpha, chloroplastic.